The sequence spans 213 residues: Endonuclease III (213 aa).

The HhH domain occupies 108–127 (FKELIKLPGVGRKTANVVLN). Residues Cys-187, Cys-194, Cys-197, and Cys-203 each contribute to the [4Fe-4S] cluster site.

The protein belongs to the Nth/MutY family. It depends on [4Fe-4S] cluster as a cofactor.

The catalysed reaction is 2'-deoxyribonucleotide-(2'-deoxyribose 5'-phosphate)-2'-deoxyribonucleotide-DNA = a 3'-end 2'-deoxyribonucleotide-(2,3-dehydro-2,3-deoxyribose 5'-phosphate)-DNA + a 5'-end 5'-phospho-2'-deoxyribonucleoside-DNA + H(+). Functionally, DNA repair enzyme that has both DNA N-glycosylase activity and AP-lyase activity. The DNA N-glycosylase activity releases various damaged pyrimidines from DNA by cleaving the N-glycosidic bond, leaving an AP (apurinic/apyrimidinic) site. The AP-lyase activity cleaves the phosphodiester bond 3' to the AP site by a beta-elimination, leaving a 3'-terminal unsaturated sugar and a product with a terminal 5'-phosphate. The sequence is that of Endonuclease III from Rickettsia felis (strain ATCC VR-1525 / URRWXCal2) (Rickettsia azadi).